Here is a 954-residue protein sequence, read N- to C-terminus: Serine/threonine-protein kinase ste20 (954 aa).

The segment covering 1–17 (MDGQLSLLSPTSSSSTS) has biased composition (low complexity). Disordered stretches follow at residues 1–165 (MDGQ…YDPL) and 203–316 (AAPA…RKKS). Basic residues predominate over residues 18-28 (HSRKRLTKKQR). Composition is skewed to polar residues over residues 33–42 (NHRTSSSFNV), 57–75 (SASSLRQGPNCNQSPSLAR), and 100–121 (RSHTTRSQSANRPYNPTQTIPT). 3 stretches are compositionally biased toward low complexity: residues 127 to 136 (SPASSSQPQT), 143 to 153 (SAVASTTVTSS), and 203 to 214 (AAPAPTSTTTIA). Residues 224 to 234 (VAPPPPPPPPA) are compositionally biased toward pro residues. Composition is skewed to low complexity over residues 245-256 (ARSSKPSKSPKS) and 265-277 (ASSFRHSASFSSA). Residues 334-347 (ISAPENPVHVTHVG) form the CRIB domain. 2 disordered regions span residues 440–562 (PMIS…VQAS) and 587–655 (QAMA…SNAI). 2 stretches are compositionally biased toward pro residues: residues 463–475 (RAPPPVPKGPGPL) and 514–527 (MPPPGDEAPMPYLP). The Protein kinase domain maps to 674–925 (YRGFTKIGQG…AHDLLRHDFM (252 aa)). ATP contacts are provided by residues 680–688 (IGQGASGGV) and lysine 703. Aspartate 793 acts as the Proton acceptor in catalysis.

The protein belongs to the protein kinase superfamily. STE Ser/Thr protein kinase family. STE20 subfamily.

It localises to the cytoplasm. Its subcellular location is the nucleus. The catalysed reaction is L-seryl-[protein] + ATP = O-phospho-L-seryl-[protein] + ADP + H(+). The enzyme catalyses L-threonyl-[protein] + ATP = O-phospho-L-threonyl-[protein] + ADP + H(+). MAP4K component of the MAPK pathway required for the mating pheromone response and the regulation of cell polarity and cell cycle. Phosphorylates histone H2B to form H2BS10ph. This chain is Serine/threonine-protein kinase ste20 (stk-4), found in Neurospora crassa (strain ATCC 24698 / 74-OR23-1A / CBS 708.71 / DSM 1257 / FGSC 987).